Consider the following 194-residue polypeptide: 3-isopropylmalate dehydratase small subunit (194 aa).

It belongs to the LeuD family. LeuD type 1 subfamily. In terms of assembly, heterodimer of LeuC and LeuD.

The enzyme catalyses (2R,3S)-3-isopropylmalate = (2S)-2-isopropylmalate. Its pathway is amino-acid biosynthesis; L-leucine biosynthesis; L-leucine from 3-methyl-2-oxobutanoate: step 2/4. In terms of biological role, catalyzes the isomerization between 2-isopropylmalate and 3-isopropylmalate, via the formation of 2-isopropylmaleate. This Limosilactobacillus fermentum (strain NBRC 3956 / LMG 18251) (Lactobacillus fermentum) protein is 3-isopropylmalate dehydratase small subunit.